Consider the following 295-residue polypeptide: MALRQCAIYGKGGIGKSTTTQNLVSALAEMGKKVMIIGCDPKADSTRLILHAKAQNTIMEMAAEVGSVEDLELEDVLQIGYGGVRCAESGGPEPGVGCAGRGVITAINFLEEEGAYEEDLDFVFYDVLGDVVCGGFAMPIRENKAQEIYIVCSGEMMAMYAANNISKGIVKYAKSGSVRLAGLICNSRQTDREDELIIALADKLGTQMIHFVPRDNIVQRAEIRRMTVIEYDPTCKQANEYRTLANKVVNNKLFVVPTPVTMDELEELLMEFGIMDVEDETIIGKTAAEEAAATA.

Residue 10-17 (GKGGIGKS) coordinates ATP. Cys-98 contributes to the [4Fe-4S] cluster binding site. Arg-101 bears the ADP-ribosylarginine; by dinitrogenase reductase ADP-ribosyltransferase mark. Residue Cys-133 coordinates [4Fe-4S] cluster.

This sequence belongs to the NifH/BchL/ChlL family. As to quaternary structure, homodimer. The cofactor is [4Fe-4S] cluster. Post-translationally, the reversible ADP-ribosylation of Arg-101 inactivates the nitrogenase reductase and regulates nitrogenase activity.

The catalysed reaction is N2 + 8 reduced [2Fe-2S]-[ferredoxin] + 16 ATP + 16 H2O = H2 + 8 oxidized [2Fe-2S]-[ferredoxin] + 2 NH4(+) + 16 ADP + 16 phosphate + 6 H(+). Its function is as follows. The key enzymatic reactions in nitrogen fixation are catalyzed by the nitrogenase complex, which has 2 components: the iron protein and the molybdenum-iron protein. In Tolumonas auensis (strain DSM 9187 / NBRC 110442 / TA 4), this protein is Nitrogenase iron protein.